The chain runs to 131 residues: Peptide methionine sulfoxide reductase MsrB (131 aa).

Residues 8 to 130 form the MsrB domain; it reads LDEWRSMLDP…NSVCIDLRPR (123 aa). Residues Cys-47, Cys-50, Cys-96, and Cys-99 each coordinate Zn(2+). The Nucleophile role is filled by Cys-119.

The protein belongs to the MsrB Met sulfoxide reductase family. It depends on Zn(2+) as a cofactor.

It carries out the reaction L-methionyl-[protein] + [thioredoxin]-disulfide + H2O = L-methionyl-(R)-S-oxide-[protein] + [thioredoxin]-dithiol. This is Peptide methionine sulfoxide reductase MsrB from Pseudomonas putida (strain GB-1).